A 291-amino-acid chain; its full sequence is Beta-lactamase CTX-M-8 (291 aa).

Residues 1–30 (MMRHRVKRMMLMTTACISLLLGSAPLYAQA) form the signal peptide. The active-site Nucleophile; acyl-ester intermediate is S73. K76, S133, E169, and S240 together coordinate a beta-lactam.

It belongs to the class-A beta-lactamase family. As to quaternary structure, monomer.

Its subcellular location is the secreted. It carries out the reaction a beta-lactam + H2O = a substituted beta-amino acid. Inhibited by the beta-lactamase-blocking agents clavulanic acid, tazobactam and sulbactam; in the DH5alpha strain of E.coli. In terms of biological role, extended-spectrum beta-lactamase (ESBL) which confers resistance to penicillins, as well as first, third and fourth-generation cephalosporins. Has cefotaxime-hydrolyzing activity. Inactive against cephalosporin antibiotic, cefoxitin, and the carbapenem, imipenem. The polypeptide is Beta-lactamase CTX-M-8 (Citrobacter amalonaticus).